The primary structure comprises 121 residues: Putative iron-sulfur cluster insertion protein ErpA (121 aa).

The iron-sulfur cluster site is built by Cys-49, Cys-113, and Cys-115.

This sequence belongs to the HesB/IscA family. Homodimer. The cofactor is iron-sulfur cluster.

Its function is as follows. Required for insertion of 4Fe-4S clusters. The sequence is that of Putative iron-sulfur cluster insertion protein ErpA from Nitrosomonas europaea (strain ATCC 19718 / CIP 103999 / KCTC 2705 / NBRC 14298).